The sequence spans 309 residues: Homoserine kinase (309 aa).

ATP is bound at residue 91–101 (PLARGLGSSAA).

This sequence belongs to the GHMP kinase family. Homoserine kinase subfamily.

The protein resides in the cytoplasm. The catalysed reaction is L-homoserine + ATP = O-phospho-L-homoserine + ADP + H(+). It functions in the pathway amino-acid biosynthesis; L-threonine biosynthesis; L-threonine from L-aspartate: step 4/5. Catalyzes the ATP-dependent phosphorylation of L-homoserine to L-homoserine phosphate. The protein is Homoserine kinase of Bacillus velezensis (strain DSM 23117 / BGSC 10A6 / LMG 26770 / FZB42) (Bacillus amyloliquefaciens subsp. plantarum).